Reading from the N-terminus, the 81-residue chain is Trefoil factor 3 (81 aa).

The N-terminal stretch at 1–23 (MEARTFWLLVVAVLALGSSSSTG) is a signal peptide. The P-type domain maps to 31–74 (NQCAVPAKDRVDCGYPEVTPEQCNNRGCCFDSSIHGVPWCFKPL). 3 disulfides stabilise this stretch: C33–C59, C43–C58, and C53–C70.

As to quaternary structure, monomer. Homodimer; disulfide-linked.

Its subcellular location is the secreted. It localises to the extracellular space. The protein resides in the extracellular matrix. It is found in the cytoplasm. Its function is as follows. Involved in the maintenance and repair of the intestinal mucosa. Promotes the mobility of epithelial cells in healing processes (motogen). In Bos taurus (Bovine), this protein is Trefoil factor 3 (TFF3).